The primary structure comprises 68 residues: Purkinje cell protein 4-like protein 1 (68 aa).

Over residues 1-16 (MSELNTKTPPAANQAS) the composition is skewed to polar residues. A disordered region spans residues 1 to 42 (MSELNTKTPPAANQASDPEEKGKPGSIKKAEEEEEIDIDLTA). Phosphothreonine is present on threonine 8. The segment covering 18–31 (PEEKGKPGSIKKAE) has biased composition (basic and acidic residues). In terms of domain architecture, IQ spans 45 to 68 (TEKAALAIQGKFRRFQKRKKDSSS).

It belongs to the PCP4 family. Expressed in laminar and nuclear structures of the CNS.

In Mus musculus (Mouse), this protein is Purkinje cell protein 4-like protein 1 (Pcp4l1).